A 314-amino-acid chain; its full sequence is Ribosomal RNA small subunit methyltransferase H (314 aa).

S-adenosyl-L-methionine contacts are provided by residues 36-38, Asp56, Phe80, Asp102, and Gln109; that span reads GGH.

It belongs to the methyltransferase superfamily. RsmH family.

It is found in the cytoplasm. The enzyme catalyses cytidine(1402) in 16S rRNA + S-adenosyl-L-methionine = N(4)-methylcytidine(1402) in 16S rRNA + S-adenosyl-L-homocysteine + H(+). Its function is as follows. Specifically methylates the N4 position of cytidine in position 1402 (C1402) of 16S rRNA. The chain is Ribosomal RNA small subunit methyltransferase H from Citrobacter koseri (strain ATCC BAA-895 / CDC 4225-83 / SGSC4696).